Consider the following 1012-residue polypeptide: Centriole and centriolar satellite protein OFD1 (1012 aa).

The 33-residue stretch at 70 to 102 (LIGASNSLVADHLQRCGYEYSLSVFFPESGLAK) folds into the LisH domain. Coiled coils occupy residues 189–557 (QRIK…ENEV) and 622–662 (DSDL…NSAK). A mediates homooligomerization region spans residues 609-665 (TNYPTAWVEGSSPDSDLEFVANTKARVKELQQEAERLEKAFRSYHRRVIKNSAKSPL). The interval 615–1012 (WVEGSSPDSD…FSHEELDDSW (398 aa)) is mediates the interaction with SDCCAG8. A phosphoserine mark is found at S663, S669, S686, and S720. Positions 719-744 (GSAASRLRGGTSSRRLSSTPLPKAKR) are disordered. Residues 720-737 (SAASRLRGGTSSRRLSST) show a composition bias toward low complexity. S735 carries the phosphoserine; by PKA modification. Residues S745, S774, S789, and S811 each carry the phosphoserine modification. Residues 757-794 (RSHIASPSPCPDRMPLPSPTESRHSLSIPPVSSPPEQK) form a disordered region. Pro residues predominate over residues 764–774 (SPCPDRMPLPS). Disordered stretches follow at residues 824 to 904 (FESS…LQEV) and 963 to 1012 (KIIQ…DDSW). The stretch at 867–956 (SVDQKQIEEQ…IKDKSAHSEN (90 aa)) forms a coiled coil. Composition is skewed to basic and acidic residues over residues 871–904 (KQIE…LQEV) and 973–982 (SADKSSKKMV).

Belongs to the OFD1 family. Homooligomer. Interacts with LCA5. Interacts with RUVBL1; the interaction is direct and may mediate interaction with the NuA4 histone acetyltransferase complex. Interacts with SDCCAG8; the interaction is direct. Interacts with MAP1LC3B. Interacts with C2CD3; OFD1 may act as a negative regulator of C2CD3. Forms a complex with KIAA0753/OFIP and CEP20/FOR20; the interaction with CEP20 is detected only in the presence of KIAA0753. Interacts with PCM1; this interaction may be mediated by KIAA0753/OFIP. Interacts with TBC1D31; regulates OFD1 activity in cilium assembly. Post-translationally, phosphorylated. Phosphorylation at Ser-735, by the cAMP-dependent protein kinase PKA, triggers ubiquitination and proteasomal degradation of OFD1. Also increases its interaction with TBC1D31 and regulates its function in ciliogenesis. In terms of processing, ubiquitinated by PJA2, upon phosphorylation at Ser-735 by PKA, leads to the proteasomal degradation of OFD1. In terms of tissue distribution, widely expressed. Expressed in 9 and 14 weeks old embryos in metanephric mesenchyme, oral mucosa, lung, heart, nasal and cranial cartilage, and brain. Expressed in metanephros, brain, tongue, and limb.

The protein localises to the cytoplasm. It localises to the cytoskeleton. The protein resides in the microtubule organizing center. Its subcellular location is the centrosome. It is found in the centriole. The protein localises to the cilium basal body. It localises to the nucleus. The protein resides in the centriolar satellite. Component of the centrioles controlling mother and daughter centrioles length. Recruits to the centriole IFT88 and centriole distal appendage-specific proteins including CEP164. Involved in the biogenesis of the cilium, a centriole-associated function. The cilium is a cell surface projection found in many vertebrate cells required to transduce signals important for development and tissue homeostasis. Plays an important role in development by regulating Wnt signaling and the specification of the left-right axis. Only OFD1 localized at the centriolar satellites is removed by autophagy, which is an important step in the ciliogenesis regulation. The polypeptide is Centriole and centriolar satellite protein OFD1 (OFD1) (Homo sapiens (Human)).